The chain runs to 379 residues: UDP-4-amino-4-deoxy-L-arabinose--oxoglutarate aminotransferase (379 aa).

Lys182 bears the N6-(pyridoxal phosphate)lysine mark.

Belongs to the DegT/DnrJ/EryC1 family. ArnB subfamily. In terms of assembly, homodimer. It depends on pyridoxal 5'-phosphate as a cofactor.

The enzyme catalyses UDP-4-amino-4-deoxy-beta-L-arabinose + 2-oxoglutarate = UDP-beta-L-threo-pentopyranos-4-ulose + L-glutamate. It participates in nucleotide-sugar biosynthesis; UDP-4-deoxy-4-formamido-beta-L-arabinose biosynthesis; UDP-4-deoxy-4-formamido-beta-L-arabinose from UDP-alpha-D-glucuronate: step 2/3. Its pathway is bacterial outer membrane biogenesis; lipopolysaccharide biosynthesis. In terms of biological role, catalyzes the conversion of UDP-4-keto-arabinose (UDP-Ara4O) to UDP-4-amino-4-deoxy-L-arabinose (UDP-L-Ara4N). The modified arabinose is attached to lipid A and is required for resistance to polymyxin and cationic antimicrobial peptides. In Salmonella schwarzengrund (strain CVM19633), this protein is UDP-4-amino-4-deoxy-L-arabinose--oxoglutarate aminotransferase.